The primary structure comprises 638 residues: Growth hormone receptor (638 aa).

The first 18 residues, 1–18 (MDLWQLLLTVALAGSSDA), serve as a signal peptide directing secretion. Topologically, residues 19–264 (FSGSEATPAT…SPFTCEEDFR (246 aa)) are extracellular. The segment at 30–51 (GRASESVQRVHPGLGTNSSGKP) is disordered. An N-linked (GlcNAc...) asparagine glycan is attached at N46. Cystine bridges form between C56–C66 and C101–C112. Residue N115 is glycosylated (N-linked (GlcNAc...) asparagine). A disulfide bridge links C126 with C140. The Fibronectin type-III domain maps to 151–254 (PPIGLNWTLL…EVLYVTLPQM (104 aa)). N156, N161, and N200 each carry an N-linked (GlcNAc...) asparagine glycan. Positions 240–244 (YGEFS) match the WSXWS motif motif. The required for ADAM17-mediated proteolysis stretch occupies residues 260–262 (EED). The chain crosses the membrane as a helical span at residues 265–288 (FPWFLIIIFGIFGLTVMLFVFIFS). Topologically, residues 289-638 (KQQRIKMLIL…STDQLNKILP (350 aa)) are cytoplasmic. Positions 294–379 (KMLILPPVPV…HQKSLSVLAA (86 aa)) are required for JAK2 binding. Positions 297 to 305 (ILPPVPVPK) match the Box 1 motif motif. The UbE motif motif lies at 340–349 (DSWVEFIELD). Residue S341 is modified to Phosphoserine. The residue at position 487 (Y487) is a Phosphotyrosine. The disordered stretch occupies residues 573-592 (TTTAERSGTAEDAPGSEMPV). Position 595 is a phosphotyrosine (Y595).

This sequence belongs to the type I cytokine receptor family. Type 1 subfamily. As to quaternary structure, on growth hormone (GH) binding, forms homodimers and binds JAK2 via a box 1-containing domain. Post-translationally, the soluble form (GHBP) is produced by phorbol ester-promoted proteolytic cleavage at the cell surface (shedding) by ADAM17/TACE. Shedding is inhibited by growth hormone (GH) binding to the receptor probably due to a conformational change in GHR rendering the receptor inaccessible to ADAM17. In terms of processing, on GH binding, phosphorylated on tyrosine residues in the cytoplasmic domain by JAK2. Ubiquitinated by the ECS(SOCS2) complex following ligand-binding and phosphorylation by JAK2, leading to its degradation by the proteasome. Regulation by the ECS(SOCS2) complex acts as a negative feedback loop of growth hormone receptor signaling. Ubiquitination is not sufficient for GHR internalization.

The protein localises to the cell membrane. Its subcellular location is the secreted. Its function is as follows. Receptor for pituitary gland growth hormone involved in regulating postnatal body growth. On ligand binding, couples to, and activates the JAK2/STAT5 pathway. The soluble form acts as a reservoir of growth hormone in plasma and may be a modulator/inhibitor of GH signaling. This chain is Growth hormone receptor, found in Oryctolagus cuniculus (Rabbit).